We begin with the raw amino-acid sequence, 342 residues long: Fructose-1,6-bisphosphatase class 1 (342 aa).

Mg(2+)-binding residues include Glu97, Asp119, Leu121, and Asp122. Residues 122 to 125 (DGSS), Asn215, Tyr247, and Lys280 each bind substrate. Glu286 lines the Mg(2+) pocket.

This sequence belongs to the FBPase class 1 family. In terms of assembly, homotetramer. Mg(2+) is required as a cofactor.

It is found in the cytoplasm. It carries out the reaction beta-D-fructose 1,6-bisphosphate + H2O = beta-D-fructose 6-phosphate + phosphate. The protein operates within carbohydrate biosynthesis; gluconeogenesis. This chain is Fructose-1,6-bisphosphatase class 1, found in Leptospira borgpetersenii serovar Hardjo-bovis (strain JB197).